The chain runs to 137 residues: Transcription antitermination protein NusB (137 aa).

Belongs to the NusB family.

In terms of biological role, involved in transcription antitermination. Required for transcription of ribosomal RNA (rRNA) genes. Binds specifically to the boxA antiterminator sequence of the ribosomal RNA (rrn) operons. The chain is Transcription antitermination protein NusB from Finegoldia magna (strain ATCC 29328 / DSM 20472 / WAL 2508) (Peptostreptococcus magnus).